Reading from the N-terminus, the 488-residue chain is MKIIEKFADEVINSGAYEPLDRVYVINKIRALVGDHDEEEENDQPAAKQLVDLAVKNEKIPDDITSREVLNDQLYDLATPTPSKTNSIFWQKMQKSSEENTDWFYKLCEDNNYVKKEAIAKNVVFSGTSSKGHSLEITINLSKPEKDPKAIAAAAHATGKKYPQCALCLENEGYLGGYGKNARSNLRIIRMNIAGRPWGFQYSPYAYFNEHCIFLDQKHIPMVINQQTLINLVEIEKIFPHYFVGSNADLPIVGGSMLAHEHYQGGRHTFPMMKAGIKKNIMFDSYPKVVAGIVDWPMSDLRLTSDNSLDLIDLGSKIIKFWDNYSDTARDIKAYEGETRHHTVTPIMHREGKNFVLDLVLRDNNTSEKYPLGIFHPHKQLWHIKKENIGLIEVMGRAILPGRLKSELEEVKKYWLGEDNKMAASHKEWADQVKAENEISLDNVDQVMEQSLVEVFEQVLQDAGVFKNNADGEEGWDKFITALTKEIK.

Belongs to the galactose-1-phosphate uridylyltransferase type 2 family.

Its subcellular location is the cytoplasm. The catalysed reaction is alpha-D-galactose 1-phosphate + UDP-alpha-D-glucose = alpha-D-glucose 1-phosphate + UDP-alpha-D-galactose. The protein operates within carbohydrate metabolism; galactose metabolism. The sequence is that of Galactose-1-phosphate uridylyltransferase (galT) from Lactobacillus helveticus (Lactobacillus suntoryeus).